We begin with the raw amino-acid sequence, 253 residues long: Hydroxyacylglutathione hydrolase (253 aa).

Zn(2+) is bound by residues H59, H61, D63, H64, H118, D143, and H181.

It belongs to the metallo-beta-lactamase superfamily. Glyoxalase II family. In terms of assembly, monomer. The cofactor is Zn(2+).

The enzyme catalyses an S-(2-hydroxyacyl)glutathione + H2O = a 2-hydroxy carboxylate + glutathione + H(+). Its pathway is secondary metabolite metabolism; methylglyoxal degradation; (R)-lactate from methylglyoxal: step 2/2. Thiolesterase that catalyzes the hydrolysis of S-D-lactoyl-glutathione to form glutathione and D-lactic acid. The sequence is that of Hydroxyacylglutathione hydrolase from Prochlorococcus marinus (strain MIT 9211).